The primary structure comprises 293 residues: Protein YIF1A (293 aa).

The segment at 1–33 (MAYHSGYGAHGSKHRARAAPDPPPLFDDTSGGY) is disordered. Ala2 is subject to N-acetylalanine. The Cytoplasmic portion of the chain corresponds to 2-138 (AYHSGYGAHG…PPRQDLNAPD (137 aa)). Ser12 bears the Phosphoserine mark. A helical membrane pass occupies residues 139-159 (LYIPTMAFITYVLLAGMALGI). Residues 160–174 (QKRFSPEVLGLCAST) lie on the Lumenal side of the membrane. The chain crosses the membrane as a helical span at residues 175–195 (ALVWVVMEVLALLLGLYLATV). The Cytoplasmic segment spans residues 196 to 203 (RSDLSTFH). The helical transmembrane segment at 204-226 (LLAYSGYKYVGMILSVLTGLLFG) threads the bilayer. The Lumenal portion of the chain corresponds to 227–229 (SDG). Residues 230–249 (YYVALAWTSSALMYFIVRSL) traverse the membrane as a helical segment. Over 250-271 (RTAALGPDSMGGPVPRQRLQLY) the chain is Cytoplasmic. Residues 272-292 (LTLGAAAFQPLIIYWLTFHLV) form a helical membrane-spanning segment.

It belongs to the YIF1 family. Interacts with YIPF5.

The protein localises to the endoplasmic reticulum membrane. It localises to the golgi apparatus membrane. The protein resides in the endoplasmic reticulum-Golgi intermediate compartment membrane. Its function is as follows. Possible role in transport between endoplasmic reticulum and Golgi. The chain is Protein YIF1A (YIF1A) from Homo sapiens (Human).